The chain runs to 227 residues: Phosphoribosylformylglycinamidine synthase subunit PurQ (227 aa).

Residues 2-226 (KFAVIQFPGS…VKAWKEEQVN (225 aa)) enclose the Glutamine amidotransferase type-1 domain. Cysteine 86 acts as the Nucleophile in catalysis. Catalysis depends on residues histidine 195 and glutamate 197.

In terms of assembly, part of the FGAM synthase complex composed of 1 PurL, 1 PurQ and 2 PurS subunits.

It is found in the cytoplasm. The enzyme catalyses N(2)-formyl-N(1)-(5-phospho-beta-D-ribosyl)glycinamide + L-glutamine + ATP + H2O = 2-formamido-N(1)-(5-O-phospho-beta-D-ribosyl)acetamidine + L-glutamate + ADP + phosphate + H(+). It catalyses the reaction L-glutamine + H2O = L-glutamate + NH4(+). It participates in purine metabolism; IMP biosynthesis via de novo pathway; 5-amino-1-(5-phospho-D-ribosyl)imidazole from N(2)-formyl-N(1)-(5-phospho-D-ribosyl)glycinamide: step 1/2. Part of the phosphoribosylformylglycinamidine synthase complex involved in the purines biosynthetic pathway. Catalyzes the ATP-dependent conversion of formylglycinamide ribonucleotide (FGAR) and glutamine to yield formylglycinamidine ribonucleotide (FGAM) and glutamate. The FGAM synthase complex is composed of three subunits. PurQ produces an ammonia molecule by converting glutamine to glutamate. PurL transfers the ammonia molecule to FGAR to form FGAM in an ATP-dependent manner. PurS interacts with PurQ and PurL and is thought to assist in the transfer of the ammonia molecule from PurQ to PurL. This chain is Phosphoribosylformylglycinamidine synthase subunit PurQ, found in Listeria monocytogenes serotype 4b (strain CLIP80459).